The primary structure comprises 185 residues: ATP synthase subunit b, cyanelle (185 aa).

The helical transmembrane segment at leucine 36 to leucine 58 threads the bilayer.

The protein belongs to the ATPase B chain family. As to quaternary structure, F-type ATPases have 2 components, F(1) - the catalytic core - and F(0) - the membrane proton channel. F(1) has five subunits: alpha(3), beta(3), gamma(1), delta(1), epsilon(1). F(0) has four main subunits: a(1), b(1), b'(1) and c(10-14). The alpha and beta chains form an alternating ring which encloses part of the gamma chain. F(1) is attached to F(0) by a central stalk formed by the gamma and epsilon chains, while a peripheral stalk is formed by the delta, b and b' chains.

It localises to the plastid. The protein localises to the cyanelle thylakoid membrane. In terms of biological role, f(1)F(0) ATP synthase produces ATP from ADP in the presence of a proton or sodium gradient. F-type ATPases consist of two structural domains, F(1) containing the extramembraneous catalytic core and F(0) containing the membrane proton channel, linked together by a central stalk and a peripheral stalk. During catalysis, ATP synthesis in the catalytic domain of F(1) is coupled via a rotary mechanism of the central stalk subunits to proton translocation. Its function is as follows. Component of the F(0) channel, it forms part of the peripheral stalk, linking F(1) to F(0). The chain is ATP synthase subunit b, cyanelle from Cyanophora paradoxa.